Reading from the N-terminus, the 226-residue chain is Leucyl/phenylalanyl-tRNA--protein transferase (226 aa).

It belongs to the L/F-transferase family.

It localises to the cytoplasm. The catalysed reaction is N-terminal L-lysyl-[protein] + L-leucyl-tRNA(Leu) = N-terminal L-leucyl-L-lysyl-[protein] + tRNA(Leu) + H(+). It carries out the reaction N-terminal L-arginyl-[protein] + L-leucyl-tRNA(Leu) = N-terminal L-leucyl-L-arginyl-[protein] + tRNA(Leu) + H(+). The enzyme catalyses L-phenylalanyl-tRNA(Phe) + an N-terminal L-alpha-aminoacyl-[protein] = an N-terminal L-phenylalanyl-L-alpha-aminoacyl-[protein] + tRNA(Phe). Its function is as follows. Functions in the N-end rule pathway of protein degradation where it conjugates Leu, Phe and, less efficiently, Met from aminoacyl-tRNAs to the N-termini of proteins containing an N-terminal arginine or lysine. This Pseudomonas putida (strain ATCC 47054 / DSM 6125 / CFBP 8728 / NCIMB 11950 / KT2440) protein is Leucyl/phenylalanyl-tRNA--protein transferase.